Consider the following 666-residue polypeptide: uncharacterized protein (666 aa).

It belongs to the MG032/MG096/MG288 family.

This is an uncharacterized protein from Mycoplasma genitalium (strain ATCC 33530 / DSM 19775 / NCTC 10195 / G37) (Mycoplasmoides genitalium).